A 150-amino-acid polypeptide reads, in one-letter code: CASP-like protein 2 (150 aa).

Residues 1–17 (MKPEAGDGRSGWRWVAT) are Cytoplasmic-facing. Residues 18–38 (FDLILRLAAIVATSTAVLAAM) traverse the membrane as a helical segment. Residues 39–41 (GKT) lie on the Extracellular side of the membrane. The chain crosses the membrane as a helical span at residues 42–62 (FVVVVNGVACFYLLMSLPVSI). Residues 63–82 (FNIMRPGACPANRAVLTALD) are Cytoplasmic-facing. A helical transmembrane segment spans residues 83 to 103 (MVTVALVTAGALVAGILYLVH). Over 104 to 121 (KAGDTHADWFSIWSQLDS) the chain is Extracellular. A helical transmembrane segment spans residues 122-142 (LSYLAVLALILHVLLSGSILY). Residues 143 to 150 (KQALNIMF) lie on the Cytoplasmic side of the membrane.

Belongs to the Casparian strip membrane proteins (CASP) family. As to quaternary structure, homodimer and heterodimers.

It is found in the cell membrane. The polypeptide is CASP-like protein 2 (Picea sitchensis (Sitka spruce)).